The following is a 239-amino-acid chain: Ribosomal RNA small subunit methyltransferase G (239 aa).

Residues G76, F81, 99 to 101 (DSS), 128 to 129 (IE), and R147 each bind S-adenosyl-L-methionine.

This sequence belongs to the methyltransferase superfamily. RNA methyltransferase RsmG family.

The protein resides in the cytoplasm. Its function is as follows. Specifically methylates the N7 position of a guanine in 16S rRNA. This is Ribosomal RNA small subunit methyltransferase G from Prochlorococcus marinus subsp. pastoris (strain CCMP1986 / NIES-2087 / MED4).